We begin with the raw amino-acid sequence, 168 residues long: Large ribosomal subunit protein uL5 (168 aa).

This sequence belongs to the universal ribosomal protein uL5 family. In terms of assembly, part of the 50S ribosomal subunit; contacts the 5S rRNA and probably tRNA. Forms a bridge to the 30S subunit in the 70S ribosome.

This is one of the proteins that bind and probably mediate the attachment of the 5S RNA into the large ribosomal subunit, where it forms part of the central protuberance. In the 70S ribosome it contacts protein S13 of the 30S subunit (bridge B1b), connecting the 2 subunits; this bridge is implicated in subunit movement. May contact the P site tRNA; the 5S rRNA and some of its associated proteins might help stabilize positioning of ribosome-bound tRNAs. In Methanospirillum hungatei JF-1 (strain ATCC 27890 / DSM 864 / NBRC 100397 / JF-1), this protein is Large ribosomal subunit protein uL5.